The following is a 105-amino-acid chain: MKPFVLVLFALLALLQYRLWFGENSLTEYFTLKDRISHQQSGNAELLERNEVLKEEIQDLKSGTEALEERARNELGLIEQGETFFRVVGNDSRSIRSSEQSQDNQ.

The Cytoplasmic portion of the chain corresponds to 1 to 3; it reads MKP. A helical membrane pass occupies residues 4–21; sequence FVLVLFALLALLQYRLWF. Residues 22–105 lie on the Periplasmic side of the membrane; that stretch reads GENSLTEYFT…RSSEQSQDNQ (84 aa). Residues 38–75 are a coiled coil; sequence HQQSGNAELLERNEVLKEEIQDLKSGTEALEERARNEL.

The protein belongs to the FtsB family. Part of a complex composed of FtsB, FtsL and FtsQ.

The protein localises to the cell inner membrane. Functionally, essential cell division protein. May link together the upstream cell division proteins, which are predominantly cytoplasmic, with the downstream cell division proteins, which are predominantly periplasmic. The chain is Cell division protein FtsB from Shewanella amazonensis (strain ATCC BAA-1098 / SB2B).